A 218-amino-acid chain; its full sequence is GTP cyclohydrolase 1 (218 aa).

Zn(2+)-binding residues include Cys-111, His-114, and Cys-182.

This sequence belongs to the GTP cyclohydrolase I family. Toroid-shaped homodecamer, composed of two pentamers of five dimers.

The catalysed reaction is GTP + H2O = 7,8-dihydroneopterin 3'-triphosphate + formate + H(+). It participates in cofactor biosynthesis; 7,8-dihydroneopterin triphosphate biosynthesis; 7,8-dihydroneopterin triphosphate from GTP: step 1/1. The polypeptide is GTP cyclohydrolase 1 (Buchnera aphidicola subsp. Schizaphis graminum (strain Sg)).